A 304-amino-acid chain; its full sequence is Cbb3-type cytochrome c oxidase subunit CcoP (304 aa).

2 helical membrane passes run leucine 11–alanine 31 and tryptophan 61–proline 81. Cytochrome c domains follow at residues glutamine 129–serine 209 and valine 216–serine 296. Residues cysteine 142, cysteine 145, histidine 146, methionine 185, cysteine 228, cysteine 231, histidine 232, and methionine 273 each contribute to the heme c site.

It belongs to the CcoP / FixP family. As to quaternary structure, component of the cbb3-type cytochrome c oxidase at least composed of CcoN, CcoO, CcoQ and CcoP. It depends on heme c as a cofactor.

The protein localises to the cell inner membrane. Its pathway is energy metabolism; oxidative phosphorylation. C-type cytochrome. Part of the cbb3-type cytochrome c oxidase complex. CcoP subunit is required for transferring electrons from donor cytochrome c via its heme groups to CcoO subunit. From there, electrons are shuttled to the catalytic binuclear center of CcoN subunit where oxygen reduction takes place. The complex also functions as a proton pump. In Rubrivivax gelatinosus (Rhodocyclus gelatinosus), this protein is Cbb3-type cytochrome c oxidase subunit CcoP.